Reading from the N-terminus, the 537-residue chain is Tyrosine-protein kinase Fyn (537 aa).

Gly-2 carries N-myristoyl glycine lipidation. 2 S-palmitoyl cysteine lipidation sites follow: Cys-3 and Cys-6. Position 12 is a phosphothreonine; by PKC (Thr-12). A disordered region spans residues 14–35 (LTEERDGSLNQSSGYRYGTDPT). 2 positions are modified to phosphoserine: Ser-21 and Ser-26. Residues 82-143 (TGVTLFVALY…PSNYVAPVDS (62 aa)) enclose the SH3 domain. One can recognise an SH2 domain in the interval 149 to 246 (WYFGKLGRKD…GLCCRLVVPC (98 aa)). Tyr-185 carries the post-translational modification Phosphotyrosine. The Protein kinase domain occupies 271–524 (LQLIKRLGNG…YLQGFLEDYF (254 aa)). ATP contacts are provided by residues 277 to 285 (LGNGQFGEV) and Lys-299. Catalysis depends on Asp-390, which acts as the Proton acceptor. Tyr-420 bears the Phosphotyrosine; by autocatalysis mark. Residue Tyr-531 is modified to Phosphotyrosine; by CSK.

It belongs to the protein kinase superfamily. Tyr protein kinase family. SRC subfamily. In terms of assembly, interacts (via its SH3 domain) with PIK3R1 and PRMT8. Interacts with FYB1, PAG1, and SH2D1A. Interacts with CD79A (tyrosine-phosphorylated form); the interaction increases FYN activity. Interacts (via SH2 domain) with CSF1R (tyrosine phosphorylated). Interacts with TOM1L1 (phosphorylated form). Interacts with KDR (tyrosine phosphorylated). Interacts (via SH3 domain) with KLHL2 (via N-terminus). Interacts with SH2D1A and SLAMF1. Interacts with ITCH; the interaction phosphorylates ITCH and negatively regulates its activity. Interacts with FASLG. Interacts with RUNX3. Interacts with KIT. Interacts with EPHA8; possible downstream effector of EPHA8 in regulation of cell adhesion. Interacts with PTK2/FAK1; this interaction leads to PTK2/FAK1 phosphorylation and activation. Interacts with CAV1; this interaction couples integrins to the Ras-ERK pathway. Interacts with UNC119. Interacts (via SH2 domain) with PTPRH (phosphorylated form). Interacts with PTPRO (phosphorylated form). Interacts with PTPRB (phosphorylated form). Interacts with FYB2. Interacts with DSCAM. Interacts with SKAP1 and FYB1; this interaction promotes the phosphorylation of CLNK. Interacts with NEDD9; in the presence of PTK2. Requires Mn(2+) as cofactor. In terms of processing, autophosphorylated at Tyr-420. Phosphorylation on the C-terminal tail at Tyr-531 by CSK maintains the enzyme in an inactive state. PTPRC/CD45 dephosphorylates Tyr-531 leading to activation. Ultraviolet B (UVB) strongly increase phosphorylation at Thr-12 and kinase activity, and promotes translocation from the cytoplasm to the nucleus. Dephosphorylation at Tyr-420 by PTPN2 negatively regulates T-cell receptor signaling. Phosphorylated at tyrosine residues, which can be enhanced by NTN1. Palmitoylated. Palmitoylation at Cys-3 and Cys-6, probably by ZDHHC21, regulates subcellular location.

The protein resides in the cytoplasm. The protein localises to the nucleus. Its subcellular location is the cell membrane. It is found in the perikaryon. The enzyme catalyses L-tyrosyl-[protein] + ATP = O-phospho-L-tyrosyl-[protein] + ADP + H(+). With respect to regulation, inhibited by phosphorylation of Tyr-531 by leukocyte common antigen and activated by dephosphorylation of this site. Non-receptor tyrosine-protein kinase that plays a role in many biological processes including regulation of cell growth and survival, cell adhesion, integrin-mediated signaling, cytoskeletal remodeling, cell motility, immune response and axon guidance. Inactive FYN is phosphorylated on its C-terminal tail within the catalytic domain. Following activation by PKA, the protein subsequently associates with PTK2/FAK1, allowing PTK2/FAK1 phosphorylation, activation and targeting to focal adhesions. Involved in the regulation of cell adhesion and motility through phosphorylation of CTNNB1 (beta-catenin) and CTNND1 (delta-catenin). Regulates cytoskeletal remodeling by phosphorylating several proteins including the actin regulator WAS and the microtubule-associated proteins MAP2 and MAPT. Promotes cell survival by phosphorylating AGAP2/PIKE-A and preventing its apoptotic cleavage. Participates in signal transduction pathways that regulate the integrity of the glomerular slit diaphragm (an essential part of the glomerular filter of the kidney) by phosphorylating several slit diaphragm components including NPHS1, KIRREL1 and TRPC6. Plays a role in neural processes by phosphorylating DPYSL2, a multifunctional adapter protein within the central nervous system, ARHGAP32, a regulator for Rho family GTPases implicated in various neural functions, and SNCA, a small pre-synaptic protein. Involved in reelin signaling by mediating phosphorylation of DAB1 following reelin (RELN)-binding to its receptor. Participates in the downstream signaling pathways that lead to T-cell differentiation and proliferation following T-cell receptor (TCR) stimulation. Phosphorylates PTK2B/PYK2 in response to T-cell receptor activation. Also participates in negative feedback regulation of TCR signaling through phosphorylation of PAG1, thereby promoting interaction between PAG1 and CSK and recruitment of CSK to lipid rafts. CSK maintains LCK and FYN in an inactive form. Promotes CD28-induced phosphorylation of VAV1. In mast cells, phosphorylates CLNK after activation of immunoglobulin epsilon receptor signaling. Can also promote CD244-mediated NK cell activation. This chain is Tyrosine-protein kinase Fyn, found in Bos taurus (Bovine).